We begin with the raw amino-acid sequence, 121 residues long: Protein p14.5 (121 aa).

The residue at position 2 (A2) is an N-acetylalanine; by host. The segment at 84-121 (SLVPDEADNKPEDDEESGGAKPKKKKHLFPKLSSHKSK) is disordered. Residues 104–121 (KPKKKKHLFPKLSSHKSK) show a composition bias toward basic residues.

The protein belongs to the asfivirus structural protein p14.5 family. As to quaternary structure, interacts with the major capsid protein. Interacts with host IRF3; this interaction interferes with the recruitment of IRF3 to TBK1. Acetylated.

It localises to the virion. Its function is as follows. Structural protein required for transport of intracellular particles from the assembly sites to the plasma membrane. Binds to both ssDNA and dsDNA. Suppressed the activation of the cGAS/STING pathway by interfering with the recruitment of IRF3 to TBK1, which in turn suppresses IRF3 phosphorylation, decreasing interferon production. This chain is Protein p14.5, found in African swine fever virus (isolate Pig/Kenya/KEN-50/1950) (ASFV).